A 308-amino-acid polypeptide reads, in one-letter code: Aspartate carbamoyltransferase catalytic subunit (308 aa).

Arginine 58 and threonine 59 together coordinate carbamoyl phosphate. Lysine 86 is a binding site for L-aspartate. Residues arginine 108, histidine 136, and glutamine 139 each contribute to the carbamoyl phosphate site. L-aspartate-binding residues include arginine 169 and arginine 227. Glycine 268 and proline 269 together coordinate carbamoyl phosphate.

This sequence belongs to the aspartate/ornithine carbamoyltransferase superfamily. ATCase family. Heterododecamer (2C3:3R2) of six catalytic PyrB chains organized as two trimers (C3), and six regulatory PyrI chains organized as three dimers (R2).

It carries out the reaction carbamoyl phosphate + L-aspartate = N-carbamoyl-L-aspartate + phosphate + H(+). The protein operates within pyrimidine metabolism; UMP biosynthesis via de novo pathway; (S)-dihydroorotate from bicarbonate: step 2/3. Its function is as follows. Catalyzes the condensation of carbamoyl phosphate and aspartate to form carbamoyl aspartate and inorganic phosphate, the committed step in the de novo pyrimidine nucleotide biosynthesis pathway. The sequence is that of Aspartate carbamoyltransferase catalytic subunit from Chloroflexus aurantiacus (strain ATCC 29366 / DSM 635 / J-10-fl).